We begin with the raw amino-acid sequence, 982 residues long: Filament-like plant protein 4 (982 aa).

Coiled coils occupy residues 39–83 (DQYT…VAKE) and 125–291 (EDRA…RKKL). The interval 311–333 (DHRQDHRQRRSPVRPSSPLMSPM) is disordered. Residues 323-333 (VRPSSPLMSPM) are compositionally biased toward low complexity. Residues 345–401 (DNMQKFHKENDLLTERLLAMEEETKMLKEALAKRNSELQVSRNLCAKTANRLQTLEA) are a coiled coil. Residues 423–433 (QNASNPPSMAS) are compositionally biased toward polar residues. Disordered regions lie at residues 423 to 466 (QNAS…AKIK) and 687 to 711 (QKDS…PDDC). Residues 452 to 475 (ELSQSNKDKANAKIKKTESANQLE) adopt a coiled-coil conformation. Positions 457 to 466 (NKDKANAKIK) are enriched in basic and acidic residues. The span at 693–705 (EHYQNGCSQSSDS) shows a compositional bias: polar residues. Positions 722-885 (ATCKFTTEEF…AECQETILLL (164 aa)) form a coiled coil. 2 stretches are compositionally biased toward polar residues: residues 896-910 (TEQV…QQAL) and 918-943 (ATST…NTMK). Residues 896-982 (TEQVASSPSQ…FSRFFSTKAK (87 aa)) form a disordered region.

This sequence belongs to the FPP family. In terms of assembly, interacts with WPP/MAF proteins.

This Arabidopsis thaliana (Mouse-ear cress) protein is Filament-like plant protein 4 (FPP4).